Consider the following 194-residue polypeptide: Fe/S biogenesis protein NfuA (194 aa).

[4Fe-4S] cluster-binding residues include Cys-152 and Cys-155.

It belongs to the NfuA family. Homodimer. [4Fe-4S] cluster is required as a cofactor.

In terms of biological role, involved in iron-sulfur cluster biogenesis. Binds a 4Fe-4S cluster, can transfer this cluster to apoproteins, and thereby intervenes in the maturation of Fe/S proteins. Could also act as a scaffold/chaperone for damaged Fe/S proteins. The polypeptide is Fe/S biogenesis protein NfuA (Pseudomonas fluorescens (strain Pf0-1)).